The following is a 350-amino-acid chain: Twinfilin-1 (350 aa).

Ser-2 bears the N-acetylserine mark. The ADF-H 1 domain maps to 2–139; the sequence is SHQTGIQASE…SLHGYRKYLL (138 aa). 2 positions are modified to phosphoserine: Ser-143 and Ser-277. The region spanning 175 to 313 is the ADF-H 2 domain; the sequence is LQGVAFPISR…TADFLYDEVH (139 aa). At Tyr-309 the chain carries Phosphotyrosine. Positions 316–350 are disordered; sequence QHAHKQSFAKPKGPAGKRGIRRLIRGPAEAEATTD. Thr-349 carries the phosphothreonine modification.

It belongs to the actin-binding proteins ADF family. Twinfilin subfamily. In terms of assembly, interacts with G-actin; ADP-actin form and capping protein (CP). May also be able to interact with TWF2 and phosphoinositides, PI(4,5)P2. When bound to PI(4,5)P2, it is down-regulated. Interacts with ACTG1. Phosphorylated on serine and threonine residues.

The protein localises to the cytoplasm. It localises to the cytoskeleton. Functionally, actin-binding protein involved in motile and morphological processes. Inhibits actin polymerization, likely by sequestering G-actin. By capping the barbed ends of filaments, it also regulates motility. Seems to play an important role in clathrin-mediated endocytosis and distribution of endocytic organelles. This Rattus norvegicus (Rat) protein is Twinfilin-1 (Twf1).